The chain runs to 35 residues: Cupiennin-1b (35 aa).

At Glu35 the chain carries Glutamic acid 1-amide.

Belongs to the cationic peptide 04 (cupiennin) family. 01 subfamily. In terms of tissue distribution, expressed by the venom gland.

The protein resides in the secreted. Functionally, has antimicrobial activity against E.coli, E.faecalis, P.aeruginosa, and S.aureus. Has insecticidal and hemolytic activities. Probably acts by disturbing membrane function with its amphipathic structure. This Cupiennius salei (American wandering spider) protein is Cupiennin-1b.